The following is a 1357-amino-acid chain: Vascular endothelial growth factor receptor 2 (1357 aa).

The first 22 residues, 1–22, serve as a signal peptide directing secretion; that stretch reads MAKTSYALLLLDILLTFNVAKA. Residues 23-774 lie on the Extracellular side of the membrane; the sequence is IELRFVPDPP…GAEEKMNVEL (752 aa). Ig-like C2-type domains are found at residues 32-120, 120-222, 216-330, 335-426, 433-553, 556-667, and 676-762; these read PTLN…SVAV, VYVF…VAVV, PYIV…ASLI, PFIA…RTFQ, PRIF…VIVF, TRFL…LLHN, and SRIV…ARIS. 19 N-linked (GlcNAc...) asparagine glycosylation sites follow: N35, N44, N66, N97, N161, N209, N247, N272, N303, N307, N407, N501, N560, N621, N631, N640, N681, N688, and N713. Cystine bridges form between C53–C104 and C153–C203. C248 and C314 are disulfide-bonded. C457 and C538 form a disulfide bridge. A disulfide bond links C579 and C651. C697 and C746 form a disulfide bridge. A helical transmembrane segment spans residues 775-795; it reads IMPIGAVVIAMFLWLLIVFVI. Over 796–1357 the chain is Cytoplasmic; the sequence is RNRKRPNDGD…AEVRYSAPPV (562 aa). A Protein kinase domain is found at 843–1173; that stretch reads LKLGEPLGRG…FTQLVEHLGN (331 aa). ATP-binding positions include 849–857 and K877; that span reads LGRGAFGQV. The segment at 944 to 975 is disordered; that stretch reads YSPYKKRTPRMPNRREVQQDEDPREGDLGLGT. The Proton acceptor role is filled by D1039. A phosphotyrosine; by autocatalysis mark is found at Y1065, Y1070, Y1186, and Y1222. Residues 1296 to 1357 form a disordered region; it reads SLASESSNQT…AEVRYSAPPV (62 aa). Residues 1298–1312 are compositionally biased toward polar residues; the sequence is ASESSNQTSGYQSGY.

Belongs to the protein kinase superfamily. Tyr protein kinase family. CSF-1/PDGF receptor subfamily. As to quaternary structure, interacts with isoform VEGF165 of vegfaa and, to a lesser extent, with isoform VEGF171 of vegfab. Interacts (via juxtamembrane region) with chaperone pdcl3 (via thioredoxin fold region); the interaction leads to increased vegfr2 abundance through inhibition of its ubiquitination and degradation. First expressed in embryos between 5- and 7-somites in the bilateral stripes that contain the developing angioblasts, and then localized to the intermediate cell mass (ICM) and the developing vasculature. By 30 hpf, expressed in the major trunk, head and intersomitic vessels, persisting through 4 dpf when expression is seen in developing subintestinal veins and in the remaining vasculature.

The protein localises to the cell membrane. It localises to the cytoplasm. The protein resides in the nucleus. Its subcellular location is the cytoplasmic vesicle. It is found in the early endosome. The protein localises to the cell junction. It localises to the endoplasmic reticulum. The catalysed reaction is L-tyrosyl-[protein] + ATP = O-phospho-L-tyrosyl-[protein] + ADP + H(+). Its function is as follows. Receptor for VEGF or VEGFC. Has a tyrosine-protein kinase activity. Combinations of multiple VEGF receptors are required for development of different blood vessel types in the embryo. Involved in angiogenesis, specifically in VEGF-induced sprouting of new blood vessels. Particularly involved in artery formation. Does not appear to be required for hematopoiesis. This Danio rerio (Zebrafish) protein is Vascular endothelial growth factor receptor 2.